The sequence spans 276 residues: NAD-capped RNA hydrolase NudC (276 aa).

Arg-82 contacts substrate. Zn(2+) contacts are provided by Cys-112 and Cys-115. Glu-125 provides a ligand contact to substrate. Zn(2+)-binding residues include Cys-130 and Cys-133. Position 138 (Tyr-138) interacts with substrate. The 124-residue stretch at 139-262 (PRISPSMIVL…SIARYLIDLY (124 aa)) folds into the Nudix hydrolase domain. Ala-172, Glu-188, and Glu-192 together coordinate a divalent metal cation. A Nudix box motif is present at residues 173–194 (GFAEPGESAEDCLVREVREEVA). 206–213 (QCWPFPHS) is a substrate binding site. Residue Glu-233 coordinates a divalent metal cation. Ala-255 contributes to the substrate binding site.

Belongs to the Nudix hydrolase family. NudC subfamily. Homodimer. Mg(2+) is required as a cofactor. Requires Mn(2+) as cofactor. It depends on Zn(2+) as a cofactor.

It carries out the reaction a 5'-end NAD(+)-phospho-ribonucleoside in mRNA + H2O = a 5'-end phospho-adenosine-phospho-ribonucleoside in mRNA + beta-nicotinamide D-ribonucleotide + 2 H(+). The catalysed reaction is NAD(+) + H2O = beta-nicotinamide D-ribonucleotide + AMP + 2 H(+). It catalyses the reaction NADH + H2O = reduced beta-nicotinamide D-ribonucleotide + AMP + 2 H(+). MRNA decapping enzyme that specifically removes the nicotinamide adenine dinucleotide (NAD) cap from a subset of mRNAs by hydrolyzing the diphosphate linkage to produce nicotinamide mononucleotide (NMN) and 5' monophosphate mRNA. The NAD-cap is present at the 5'-end of some mRNAs and stabilizes RNA against 5'-processing. Has preference for mRNAs with a 5'-end purine. Catalyzes the hydrolysis of a broad range of dinucleotide pyrophosphates. This is NAD-capped RNA hydrolase NudC from Pseudomonas putida (strain ATCC 47054 / DSM 6125 / CFBP 8728 / NCIMB 11950 / KT2440).